The following is a 139-amino-acid chain: Transcriptional regulator WhiB5 (139 aa).

One can recognise a 4Fe-4S Wbl-type domain in the interval 4–77 (PCATDPELWF…AGIKLPGGQY (74 aa)). Residues C5, C41, C45, and C53 each contribute to the [4Fe-4S] cluster site.

Belongs to the WhiB family. It depends on [4Fe-4S] cluster as a cofactor. In terms of processing, the Fe-S cluster can be nitrosylated by nitric oxide (NO). Upon Fe-S cluster removal intramolecular disulfide bonds are formed.

Its subcellular location is the cytoplasm. Its function is as follows. A transcription factor that is probably redox-responsive. Probably plays a role in immunomodulation and reactivation after chronic infection. Its induction results in transcription of a number of genes including sigM, and the genes for 2 type VII secretion systems ESX-2 and ESX-4. Seems to negatively regulate its own expression. The apo-form has been shown to act as a protein disulfide reductase. The apo- but not holo-form probably binds DNA. The chain is Transcriptional regulator WhiB5 (whiB5) from Mycobacterium tuberculosis (strain ATCC 25618 / H37Rv).